The chain runs to 417 residues: MSSLDAVVHGARELVVGPAAGGDTLETHADGAVAVVDGAVAAVGDTADVLAAYPAENATTAIDATGKTVLPGFVDPHTHALFAGDRSDEFAAKLRGKPYQEILAEGGGILRTVDAVRAASDAALVANLTAQLDVMLAHGTTTAEVKTGYGLDTETECRMLDAIAAAAAEHPVDVVTTFLGAHAVPDDTDADAYVDAVIDDQLPAAANGPARFCDVFCEADVFTVEQSRRILDAGREHGLAPKLHAEEFTRLGGAQLAADLGATSADHLLHATPEDAAALADAGVTPVLLPATAFVLDEAYADPQQFLAAADNRTGAPVALGTDLNPNCYTHSMGFVVSLACNGMRMAPADAVLAATAWAASALDRGRDGTGTLREGTDGDVLVVDAPSHVHLPYNPGVNNVEAVLTDGTVAVGGGGA.

2 residues coordinate Fe(3+): His77 and His79. Residues His77 and His79 each coordinate Zn(2+). The 4-imidazolone-5-propanoate site is built by Arg86, Tyr149, and His182. Tyr149 lines the N-formimidoyl-L-glutamate pocket. Residue His244 participates in Fe(3+) binding. His244 lines the Zn(2+) pocket. 4-imidazolone-5-propanoate is bound at residue Glu247. Asp323 contacts Fe(3+). Asp323 serves as a coordination point for Zn(2+). Residue Asn325 participates in N-formimidoyl-L-glutamate binding.

It belongs to the metallo-dependent hydrolases superfamily. HutI family. Zn(2+) is required as a cofactor. Fe(3+) serves as cofactor.

It is found in the cytoplasm. It carries out the reaction 4-imidazolone-5-propanoate + H2O = N-formimidoyl-L-glutamate. Its pathway is amino-acid degradation; L-histidine degradation into L-glutamate; N-formimidoyl-L-glutamate from L-histidine: step 3/3. Catalyzes the hydrolytic cleavage of the carbon-nitrogen bond in imidazolone-5-propanoate to yield N-formimidoyl-L-glutamate. It is the third step in the universal histidine degradation pathway. The chain is Imidazolonepropionase from Halobacterium salinarum (strain ATCC 29341 / DSM 671 / R1).